Here is a 573-residue protein sequence, read N- to C-terminus: AP-4 complex accessory subunit Tepsin (573 aa).

The ENTH domain occupies 8-141; the sequence is RDRLSFLHRL…FSDAVPQPPS (134 aa). Disordered stretches follow at residues 136–155 and 194–311; these read VPQP…MGAQ and NAVR…NDCQ. Pro residues predominate over residues 137-150; it reads PQPPSQPPQIPPPA. Residues 217-229 show a composition bias toward polar residues; that stretch reads PAVTPSASHTHPN. A compositionally biased stretch (low complexity) spans 260-293; sequence SSPSSQNSSCTSNLSRASDSGSRSGSDSHSGTSR. Residues 294 to 303 show a composition bias toward basic and acidic residues; it reads EPGDLAERAE. A Phosphoserine modification is found at S400. Residues 497–526 form a disordered region; the sequence is CSSEQGTESEQRLENTDTPEDSSSPLPWSP. Positions 526–536 are interaction with AP4B1; sequence PNSLFAGMELV. An interaction with AP4E1 region spans residues 563–573; that stretch reads SEPSAFAFLNM.

As to quaternary structure, interacts with AP4B1 and AP4E1; the interaction is direct and mediates the association of TEPSIN with the adapter-like complex 4 (AP-4), a heterotetramer composed of AP4B1, AP4E1, AP4M1 and AP4S1.

It is found in the golgi apparatus. The protein localises to the trans-Golgi network membrane. It localises to the cytoplasmic vesicle. The protein resides in the cytoplasm. Its subcellular location is the cytosol. Associates with the adapter-like complex 4 (AP-4) and may therefore play a role in vesicular trafficking of proteins at the trans-Golgi network. This is AP-4 complex accessory subunit Tepsin from Mus musculus (Mouse).